Consider the following 199-residue polypeptide: OPA3-like protein (199 aa).

A coiled-coil region spans residues 98–141 (RSSEKDKKKEEALQNRFKNLEEKLEVQQETINNLTNVIEAIQSS).

Belongs to the OPA3 family.

The sequence is that of OPA3-like protein from Dictyostelium discoideum (Social amoeba).